Here is a 72-residue protein sequence, read N- to C-terminus: Translation initiation factor IF-1 (72 aa).

The 72-residue stretch at 1–72 (MAKEESIEIE…TKGRITYRYK (72 aa)) folds into the S1-like domain.

Belongs to the IF-1 family. As to quaternary structure, component of the 30S ribosomal translation pre-initiation complex which assembles on the 30S ribosome in the order IF-2 and IF-3, IF-1 and N-formylmethionyl-tRNA(fMet); mRNA recruitment can occur at any time during PIC assembly.

It is found in the cytoplasm. One of the essential components for the initiation of protein synthesis. Stabilizes the binding of IF-2 and IF-3 on the 30S subunit to which N-formylmethionyl-tRNA(fMet) subsequently binds. Helps modulate mRNA selection, yielding the 30S pre-initiation complex (PIC). Upon addition of the 50S ribosomal subunit IF-1, IF-2 and IF-3 are released leaving the mature 70S translation initiation complex. This is Translation initiation factor IF-1 from Chlorobium chlorochromatii (strain CaD3).